Consider the following 330-residue polypeptide: Ketol-acid reductoisomerase (NADP(+)) (330 aa).

Positions 1–181 (MNVYYEQDAD…GGTKAGVIET (181 aa)) constitute a KARI N-terminal Rossmann domain. NADP(+)-binding positions include 24–27 (YGSQ), Arg47, Ser50, Ser52, and 82–85 (DQNQ). The active site involves His107. Residue Gly133 coordinates NADP(+). Residues 182–327 (SIKNETETDL…AKLRDMMSWL (146 aa)) enclose the KARI C-terminal knotted domain. The Mg(2+) site is built by Asp190, Glu194, Glu226, and Glu230. Ser251 provides a ligand contact to substrate.

The protein belongs to the ketol-acid reductoisomerase family. Mg(2+) serves as cofactor.

The enzyme catalyses (2R)-2,3-dihydroxy-3-methylbutanoate + NADP(+) = (2S)-2-acetolactate + NADPH + H(+). It catalyses the reaction (2R,3R)-2,3-dihydroxy-3-methylpentanoate + NADP(+) = (S)-2-ethyl-2-hydroxy-3-oxobutanoate + NADPH + H(+). Its pathway is amino-acid biosynthesis; L-isoleucine biosynthesis; L-isoleucine from 2-oxobutanoate: step 2/4. The protein operates within amino-acid biosynthesis; L-valine biosynthesis; L-valine from pyruvate: step 2/4. Its function is as follows. Involved in the biosynthesis of branched-chain amino acids (BCAA). Catalyzes an alkyl-migration followed by a ketol-acid reduction of (S)-2-acetolactate (S2AL) to yield (R)-2,3-dihydroxy-isovalerate. In the isomerase reaction, S2AL is rearranged via a Mg-dependent methyl migration to produce 3-hydroxy-3-methyl-2-ketobutyrate (HMKB). In the reductase reaction, this 2-ketoacid undergoes a metal-dependent reduction by NADPH to yield (R)-2,3-dihydroxy-isovalerate. The protein is Ketol-acid reductoisomerase (NADP(+)) of Pelodictyon phaeoclathratiforme (strain DSM 5477 / BU-1).